The primary structure comprises 311 residues: Dehydrogenase/reductase SDR family member 7C (311 aa).

An N-terminal signal peptide occupies residues 1–18 (MGLMAVLMLPLLLLGISG). The NAD(+) site is built by serine 47, leucine 49, tyrosine 191, lysine 195, and serine 226. Tyrosine 191 (proton acceptor) is an active-site residue.

Belongs to the short-chain dehydrogenases/reductases (SDR) family. In terms of tissue distribution, expressed in skeletal muscle and cardiac muscle. Also expressed in liver, kidney, adipocytes and skin.

The protein resides in the sarcoplasmic reticulum membrane. The catalysed reaction is all-trans-retinol + NAD(+) = all-trans-retinal + NADH + H(+). Functionally, NADH-dependent oxidoreductase which catalyzes the oxidation of all-trans-retinol to all-trans-retinal. Plays a role in the regulation of cardiac and skeletal muscle metabolic functions. Maintains Ca(2+) intracellular homeostasis by repressing Ca(2+) release from the sarcoplasmic reticulum (SR) in myotubes, possibly through local alternations in NAD/NADH or retinol/retinal. Also plays a role in Ca(2+) homeostasis by controlling Ca(2+) overload in the cytosol and the SR in myotubes. Involved in glucose uptake into skeletal muscles and muscle performance by activating PI3K and mTORC2-mediated AKT1 phosphorylation signaling pathways, possibly through the action of its downstream catalytic product all-trans-retinoic acid. The polypeptide is Dehydrogenase/reductase SDR family member 7C (Mus musculus (Mouse)).